Consider the following 171-residue polypeptide: ATP synthase subunit b (171 aa).

Residues 2–22 (VLVKMALGFLILLSPLCAMEL) traverse the membrane as a helical segment.

Belongs to the ATPase B chain family. F-type ATPases have 2 components, F(1) - the catalytic core - and F(0) - the membrane proton channel. F(1) has five subunits: alpha(3), beta(3), gamma(1), delta(1), epsilon(1). F(0) has three main subunits: a(1), b(2) and c(10-14). The alpha and beta chains form an alternating ring which encloses part of the gamma chain. F(1) is attached to F(0) by a central stalk formed by the gamma and epsilon chains, while a peripheral stalk is formed by the delta and b chains.

Its subcellular location is the cell inner membrane. In terms of biological role, f(1)F(0) ATP synthase produces ATP from ADP in the presence of a proton or sodium gradient. F-type ATPases consist of two structural domains, F(1) containing the extramembraneous catalytic core and F(0) containing the membrane proton channel, linked together by a central stalk and a peripheral stalk. During catalysis, ATP synthesis in the catalytic domain of F(1) is coupled via a rotary mechanism of the central stalk subunits to proton translocation. Functionally, component of the F(0) channel, it forms part of the peripheral stalk, linking F(1) to F(0). The sequence is that of ATP synthase subunit b from Helicobacter acinonychis (strain Sheeba).